A 243-amino-acid polypeptide reads, in one-letter code: Orotidine 5'-phosphate decarboxylase (243 aa).

Substrate-binding positions include aspartate 18, lysine 39, 66-75 (DLKFHDIPAT), threonine 130, arginine 192, glutamine 201, glycine 221, and arginine 222. The Proton donor role is filled by lysine 68.

It belongs to the OMP decarboxylase family. Type 1 subfamily. As to quaternary structure, homodimer.

It carries out the reaction orotidine 5'-phosphate + H(+) = UMP + CO2. The protein operates within pyrimidine metabolism; UMP biosynthesis via de novo pathway; UMP from orotate: step 2/2. Functionally, catalyzes the decarboxylation of orotidine 5'-monophosphate (OMP) to uridine 5'-monophosphate (UMP). In Synechococcus sp. (strain WH7803), this protein is Orotidine 5'-phosphate decarboxylase.